The sequence spans 542 residues: Anaerobic glycerol-3-phosphate dehydrogenase subunit A (542 aa).

Residue 10–38 coordinates FAD; that stretch reads DVIIIGGGATGAGIARDCALRGLRVILVE.

It belongs to the FAD-dependent glycerol-3-phosphate dehydrogenase family. As to quaternary structure, composed of a catalytic GlpA/B dimer and of membrane bound GlpC. Requires FAD as cofactor. The cofactor is FMN.

It is found in the cell inner membrane. It catalyses the reaction a quinone + sn-glycerol 3-phosphate = dihydroxyacetone phosphate + a quinol. Its pathway is polyol metabolism; glycerol degradation via glycerol kinase pathway; glycerone phosphate from sn-glycerol 3-phosphate (anaerobic route): step 1/1. Its function is as follows. Conversion of glycerol 3-phosphate to dihydroxyacetone. Uses fumarate or nitrate as electron acceptor. This is Anaerobic glycerol-3-phosphate dehydrogenase subunit A (glpA) from Escherichia coli O157:H7.